The following is a 165-amino-acid chain: Mitochondrial fission process protein 1 (165 aa).

3 helical membrane passes run 35–55 (ALVP…YVTA), 76–96 (VCVC…SVAV), and 130–150 (IGLS…DLLL).

The protein belongs to the MTFP1 family.

The protein localises to the mitochondrion inner membrane. Its function is as follows. Involved in the mitochondrial division probably by regulating membrane fission. Loss-of-function leads to apoptosis. The chain is Mitochondrial fission process protein 1 (mtfp1) from Danio rerio (Zebrafish).